The primary structure comprises 326 residues: Ribonuclease Z (326 aa).

H62, H64, D66, H67, H140, D211, and H269 together coordinate Zn(2+). D66 (proton acceptor) is an active-site residue.

This sequence belongs to the RNase Z family. As to quaternary structure, homodimer. Zn(2+) serves as cofactor.

It catalyses the reaction Endonucleolytic cleavage of RNA, removing extra 3' nucleotides from tRNA precursor, generating 3' termini of tRNAs. A 3'-hydroxy group is left at the tRNA terminus and a 5'-phosphoryl group is left at the trailer molecule.. Zinc phosphodiesterase, which displays some tRNA 3'-processing endonuclease activity. Probably involved in tRNA maturation, by removing a 3'-trailer from precursor tRNA. In Synechocystis sp. (strain ATCC 27184 / PCC 6803 / Kazusa), this protein is Ribonuclease Z.